A 306-amino-acid polypeptide reads, in one-letter code: Methionyl-tRNA formyltransferase (306 aa).

109–112 (SILP) contributes to the (6S)-5,6,7,8-tetrahydrofolate binding site.

It belongs to the Fmt family.

It catalyses the reaction L-methionyl-tRNA(fMet) + (6R)-10-formyltetrahydrofolate = N-formyl-L-methionyl-tRNA(fMet) + (6S)-5,6,7,8-tetrahydrofolate + H(+). Functionally, attaches a formyl group to the free amino group of methionyl-tRNA(fMet). The formyl group appears to play a dual role in the initiator identity of N-formylmethionyl-tRNA by promoting its recognition by IF2 and preventing the misappropriation of this tRNA by the elongation apparatus. In Sphingopyxis alaskensis (strain DSM 13593 / LMG 18877 / RB2256) (Sphingomonas alaskensis), this protein is Methionyl-tRNA formyltransferase.